Consider the following 408-residue polypeptide: MARDEHDSRYLTAELPGTGGLFKETPEDFLVEEISLYLPCGEGEHTYAVIEKRGITTLEAIRRLCRATGAPERDTGYAGMKDARGITRQTVSLPRVTPAEVMGLNIPGIRILSADRHRNKLRLGHLAGNRFRLRLRETVPDAADRARAILDVLARRGVPNRFGEQRYGIQGNSHLVGRAMLAGDWRGAVDLLMGDPAKVEGERWRAAIEAYRQGDLAGSLSLFPGHCRTERDVLQRLAKRPDDFERAVHGVHPRLKKLYLSACQSALFDRVLETRLQTIDHVMEGDLAWKHDNGACFLVTDAKAEAPRAERFEISPTGPLFGCRMTSPEGEPAALEKSILDAAGLTPAAFNLAGGLRMEGERRPLRVPLEGPELSCEEEDLVLRFSLPRGSYATAVLREVMKRPGNGA.

Residue Asp-82 is the Nucleophile of the active site. The TRUD domain occupies 157–367 (GVPNRFGEQR…MEGERRPLRV (211 aa)).

This sequence belongs to the pseudouridine synthase TruD family.

It carries out the reaction uridine(13) in tRNA = pseudouridine(13) in tRNA. Responsible for synthesis of pseudouridine from uracil-13 in transfer RNAs. This Geobacter sulfurreducens (strain ATCC 51573 / DSM 12127 / PCA) protein is tRNA pseudouridine synthase D.